A 182-amino-acid chain; its full sequence is UPF0397 protein VS_II0189 (182 aa).

Helical transmembrane passes span 8–28 (VVVI…MFGV), 41–61 (AVLA…VGFI), 72–92 (WGVW…IGLF), 110–130 (FALF…SSAF), and 146–166 (QLSI…FLIL).

This sequence belongs to the UPF0397 family.

It localises to the cell membrane. The protein is UPF0397 protein VS_II0189 of Vibrio atlanticus (strain LGP32) (Vibrio splendidus (strain Mel32)).